We begin with the raw amino-acid sequence, 347 residues long: NADH-ubiquinone oxidoreductase chain 2 (347 aa).

The next 11 membrane-spanning stretches (helical) occupy residues 1–21, 25–45, 59–79, 96–116, 122–142, 149–169, 178–198, 201–221, 237–257, 274–294, and 326–346; these read MNPM…FIVT, HWFM…PVLM, YFLT…INLM, MLIT…FWVP, VSLP…LSLL, VNMN…GWGG, IMAY…VYNP, SLLN…LLIF, APII…LPPL, NSVI…FFYM, and MLPL…LILL.

Belongs to the complex I subunit 2 family. Core subunit of respiratory chain NADH dehydrogenase (Complex I) which is composed of 45 different subunits. Interacts with TMEM242.

Its subcellular location is the mitochondrion inner membrane. The enzyme catalyses a ubiquinone + NADH + 5 H(+)(in) = a ubiquinol + NAD(+) + 4 H(+)(out). Core subunit of the mitochondrial membrane respiratory chain NADH dehydrogenase (Complex I) that is believed to belong to the minimal assembly required for catalysis. Complex I functions in the transfer of electrons from NADH to the respiratory chain. The immediate electron acceptor for the enzyme is believed to be ubiquinone. This Crocidura suaveolens gueldenstaedtii (Gueldenstaedt's shrew) protein is NADH-ubiquinone oxidoreductase chain 2.